Reading from the N-terminus, the 382-residue chain is Lipid-A-disaccharide synthase (382 aa).

It belongs to the LpxB family.

It catalyses the reaction 2-N,3-O-bis[(3R)-3-hydroxytetradecanoyl]-alpha-D-glucosaminyl 1-phosphate + UDP-2-N,3-O-bis[(3R)-3-hydroxytetradecanoyl]-alpha-D-glucosamine = lipid A disaccharide (E. coli) + UDP + H(+). The enzyme catalyses a lipid X + a UDP-2-N,3-O-bis[(3R)-3-hydroxyacyl]-alpha-D-glucosamine = a lipid A disaccharide + UDP + H(+). It functions in the pathway glycolipid biosynthesis; lipid IV(A) biosynthesis; lipid IV(A) from (3R)-3-hydroxytetradecanoyl-[acyl-carrier-protein] and UDP-N-acetyl-alpha-D-glucosamine: step 5/6. Its function is as follows. Condensation of UDP-2,3-diacylglucosamine and 2,3-diacylglucosamine-1-phosphate to form lipid A disaccharide, a precursor of lipid A, a phosphorylated glycolipid that anchors the lipopolysaccharide to the outer membrane of the cell. This is Lipid-A-disaccharide synthase from Salmonella heidelberg (strain SL476).